We begin with the raw amino-acid sequence, 204 residues long: Large ribosomal subunit protein bL25 (204 aa).

It belongs to the bacterial ribosomal protein bL25 family. CTC subfamily. In terms of assembly, part of the 50S ribosomal subunit; part of the 5S rRNA/L5/L18/L25 subcomplex. Contacts the 5S rRNA. Binds to the 5S rRNA independently of L5 and L18.

Its function is as follows. This is one of the proteins that binds to the 5S RNA in the ribosome where it forms part of the central protuberance. This Pseudomonas aeruginosa (strain LESB58) protein is Large ribosomal subunit protein bL25.